Here is a 121-residue protein sequence, read N- to C-terminus: Putative membrane protein insertion efficiency factor (121 aa).

Belongs to the UPF0161 family.

The protein localises to the cell membrane. Could be involved in insertion of integral membrane proteins into the membrane. This chain is Putative membrane protein insertion efficiency factor, found in Rhodococcus opacus (strain B4).